The following is a 303-amino-acid chain: Crk-like protein (303 aa).

One can recognise an SH2 domain in the interval 14–102 (WYMGPVSRQE…LDTTTLIEPA (89 aa)). The SH3 1 domain maps to 123–183 (DNLEYVRTLY…PVPYVEKLVR (61 aa)). Residues tyrosine 127 and tyrosine 207 each carry the phosphotyrosine modification. The interval 184 to 234 (SSPHGKHGNRNSNSYGIPEPAHAYAQPQTTTPLPAVSGSPGAAITPLPSTQ) is disordered. The SH3 2 domain maps to 235-296 (NGPVFAKAIQ…PFTHVKIFDP (62 aa)).

Belongs to the CRK family. Interacts with tyrosine-phosphorylated EPOR and INPP5D/SHIP1. Interacts with DOCK2 and DOCK5 via its first SH3 domain. Interacts with phosphorylated CBLB and IRS4. Interacts with BCAR1/CAS and NEDD9/HEF1.

May mediate the transduction of intracellular signals. This chain is Crk-like protein (CRKL), found in Homo sapiens (Human).